The sequence spans 564 residues: Ell-associated factor Eaf (564 aa).

2 disordered regions span residues 179 to 255 (SGPG…MITD) and 270 to 564 (QANI…DDDD). A compositionally biased stretch (polar residues) spans 186–205 (ENSTMRVSSKTKVSTGSRRN). S215 carries the phosphoserine modification. Residues 274-283 (SGSSTGSSSG) are compositionally biased toward low complexity. The segment covering 297-309 (GKQRQAHGKRQQI) has biased composition (basic residues). 3 stretches are compositionally biased toward low complexity: residues 315–329 (PPVQ…QQQP), 343–387 (QQQQ…QQRP), and 409–420 (ASQSVAQAAAVL). Over residues 438 to 453 (DSSDSDSGSDSDDSTE) the composition is skewed to acidic residues. Composition is skewed to low complexity over residues 463-505 (EQQQ…NQLP), 523-533 (QQPQPQPQQQQ), and 546-564 (NDLL…DDDD).

Belongs to the EAF family.

The protein localises to the nucleus. Promotes transcriptional elongation by Su(Tpl)/ELL. Essential for development. The sequence is that of Ell-associated factor Eaf from Drosophila pseudoobscura pseudoobscura (Fruit fly).